The following is a 393-amino-acid chain: Translation initiation factor eIF2B subunit beta (393 aa).

The interval 105-125 (VSSSNSSSPSQKRDIPSNEKL) is disordered. Phosphoserine is present on residues S106, S108, and S112.

It belongs to the eIF-2B alpha/beta/delta subunits family. As to quaternary structure, component of the translation initiation factor 2B (eIF2B) complex which is a heterodecamer of two sets of five different subunits: alpha, beta, gamma, delta and epsilon. Subunits alpha, beta and delta comprise a regulatory subcomplex and subunits epsilon and gamma comprise a catalytic subcomplex. Within the complex, the hexameric regulatory complex resides at the center, with the two heterodimeric catalytic subcomplexes bound on opposite sides.

Its subcellular location is the cytoplasm. It localises to the cytosol. In terms of biological role, acts as a component of the translation initiation factor 2B (eIF2B) complex, which catalyzes the exchange of GDP for GTP on the eukaryotic initiation factor 2 (eIF2) complex gamma subunit. Its guanine nucleotide exchange factor activity is repressed when bound to eIF2 complex phosphorylated on the alpha subunit, thereby limiting the amount of methionyl-initiator methionine tRNA available to the ribosome and consequently global translation is repressed. The sequence is that of Translation initiation factor eIF2B subunit beta (tif222) from Schizosaccharomyces pombe (strain 972 / ATCC 24843) (Fission yeast).